Reading from the N-terminus, the 317-residue chain is Lipase 1 (317 aa).

The first 18 residues, 1–18, serve as a signal peptide directing secretion; that stretch reads MLLKRLCFAALFSLSMVG. Cys19 carries the N-palmitoyl cysteine lipid modification. A lipid anchor (S-diacylglycerol cysteine) is attached at Cys19. The region spanning 69–296 is the AB hydrolase-1 domain; the sequence is PLLLIHGFGG…MEDVGHVPMV (228 aa). His74 is an active-site residue. The Nucleophile role is filled by Ser142. Catalysis depends on charge relay system residues Glu270 and His292.

Its subcellular location is the cell outer membrane. The enzyme catalyses a triacylglycerol + H2O = a diacylglycerol + a fatty acid + H(+). The polypeptide is Lipase 1 (lip1) (Psychrobacter immobilis).